Consider the following 466-residue polypeptide: 3-isopropylmalate dehydratase large subunit (466 aa).

The [4Fe-4S] cluster site is built by C347, C408, and C411.

This sequence belongs to the aconitase/IPM isomerase family. LeuC type 1 subfamily. As to quaternary structure, heterodimer of LeuC and LeuD. [4Fe-4S] cluster serves as cofactor.

It catalyses the reaction (2R,3S)-3-isopropylmalate = (2S)-2-isopropylmalate. It participates in amino-acid biosynthesis; L-leucine biosynthesis; L-leucine from 3-methyl-2-oxobutanoate: step 2/4. Functionally, catalyzes the isomerization between 2-isopropylmalate and 3-isopropylmalate, via the formation of 2-isopropylmaleate. In Herminiimonas arsenicoxydans, this protein is 3-isopropylmalate dehydratase large subunit.